The primary structure comprises 528 residues: MNSVDLKEDLQSLLSLENTHQNLSVPKLVEKILARDEGVLTSTGAVRATTGAYTGRSPKDKFIVKEESSEHKIDWGQVNQPISKEAFDRLYTKVVSYLKERDELFVFEGFAGADERYRMPITVVNEFAWHNLFAKQLFIRPDGSTPSSNEKPFTILSAPHFKADPETDGTNSETFIIVSFEKRTILIGGTEYAGEMKKSIFSVMNYLLPEQDILSMHCSANVGQEGDVALFFGLSGTGKTTLSASASRKLIGDDEHGWSGSGVFNIEGGCYAKCVNLSEEKEPQIYKAISFGSVLENVVLDEETREADYDDTFFTENTRAAYPIEMIDNIVKPSIAGHPSAIVFLTADAFGVLPPISRLTKEQAMYHFLSGYTSKLAGTERGVTSPETTFSTCFGSPFLPLPAHVYAEMLGKKIDEHGAKVFLVNTGWTGGGYGTGKRMNLAHTRAMVQAAIEGDLDNAEMITDDIFGLHIPLHIPGVPDEVLQPSKTWDDQEAYQEKAHFLANEFKKNFQKFSHAASDIEAKGGPLV.

Residues Arg-56, Tyr-192, and Lys-198 each contribute to the substrate site. Residues Lys-198, His-217, and 233 to 241 each bind ATP; that span reads GLSGTGKTT. Positions 198 and 217 each coordinate Mn(2+). Residue Asp-254 coordinates Mn(2+). 3 residues coordinate ATP: Glu-282, Arg-319, and Thr-444. Position 319 (Arg-319) interacts with substrate.

It belongs to the phosphoenolpyruvate carboxykinase (ATP) family. The cofactor is Mn(2+).

It is found in the cytoplasm. The enzyme catalyses oxaloacetate + ATP = phosphoenolpyruvate + ADP + CO2. Its pathway is carbohydrate biosynthesis; gluconeogenesis. Involved in the gluconeogenesis. Catalyzes the conversion of oxaloacetate (OAA) to phosphoenolpyruvate (PEP) through direct phosphoryl transfer between the nucleoside triphosphate and OAA. The protein is Phosphoenolpyruvate carboxykinase (ATP) of Bacillus pumilus (strain SAFR-032).